Consider the following 56-residue polypeptide: UPF0339 protein NMA1193/NMA1859 (56 aa).

It belongs to the UPF0339 family.

This chain is UPF0339 protein NMA1193/NMA1859, found in Neisseria meningitidis serogroup A / serotype 4A (strain DSM 15465 / Z2491).